Consider the following 163-residue polypeptide: Protein-export protein SecB (163 aa).

The protein belongs to the SecB family. In terms of assembly, homotetramer, a dimer of dimers. One homotetramer interacts with 1 SecA dimer.

It is found in the cytoplasm. Functionally, one of the proteins required for the normal export of preproteins out of the cell cytoplasm. It is a molecular chaperone that binds to a subset of precursor proteins, maintaining them in a translocation-competent state. It also specifically binds to its receptor SecA. This chain is Protein-export protein SecB, found in Shewanella woodyi (strain ATCC 51908 / MS32).